The primary structure comprises 136 residues: Ig heavy chain V region XIG8 (136 aa).

The signal sequence occupies residues 1-18; sequence GFGIFVIFMFFSPSCILS. Residues 19–128 enclose the Ig-like domain; the sequence is QTLQESGPGT…TAGYFEHWGQ (110 aa).

The chain is Ig heavy chain V region XIG8 from Xenopus laevis (African clawed frog).